Consider the following 307-residue polypeptide: Methionyl-tRNA formyltransferase (307 aa).

108–111 (SLLP) provides a ligand contact to (6S)-5,6,7,8-tetrahydrofolate.

Belongs to the Fmt family.

The catalysed reaction is L-methionyl-tRNA(fMet) + (6R)-10-formyltetrahydrofolate = N-formyl-L-methionyl-tRNA(fMet) + (6S)-5,6,7,8-tetrahydrofolate + H(+). Attaches a formyl group to the free amino group of methionyl-tRNA(fMet). The formyl group appears to play a dual role in the initiator identity of N-formylmethionyl-tRNA by promoting its recognition by IF2 and preventing the misappropriation of this tRNA by the elongation apparatus. The protein is Methionyl-tRNA formyltransferase of Stenotrophomonas maltophilia (strain K279a).